Here is a 317-residue protein sequence, read N- to C-terminus: Retinol dehydrogenase 16 (317 aa).

Position 33–57 (33–57 (FITGCDSGFGTLLARQLDRRGMRVL)) interacts with NAD(+). Tyrosine 176 acts as the Proton acceptor in catalysis. The chain crosses the membrane as a helical span at residues 289–309 (LFYLPLSYLPTFLVDALLYWT).

This sequence belongs to the short-chain dehydrogenases/reductases (SDR) family. Homodimer. Post-translationally, not glycosylated.

It localises to the endoplasmic reticulum membrane. It is found in the microsome membrane. The catalysed reaction is all-trans-retinol--[retinol-binding protein] + NAD(+) = all-trans-retinal--[retinol-binding protein] + NADH + H(+). It catalyses the reaction 9-cis-retinol + NAD(+) = 9-cis-retinal + NADH + H(+). It carries out the reaction 11-cis-retinol + NAD(+) = 11-cis-retinal + NADH + H(+). The enzyme catalyses 13-cis-retinol + NAD(+) = 13-cis-retinal + NADH + H(+). The catalysed reaction is androsterone + NAD(+) = 5alpha-androstan-3,17-dione + NADH + H(+). It catalyses the reaction 5alpha-androstane-3alpha,17beta-diol + NAD(+) = 17beta-hydroxy-5alpha-androstan-3-one + NADH + H(+). It participates in cofactor metabolism; retinol metabolism. Oxidoreductase with a preference for NAD. Oxidizes all-trans-retinol, 9-cis-retinol, 11-cis-retinol and 13-cis-retinol to the corresponding aldehydes. Has higher activity towards CRBP-bound retinol than with free retinol. Oxidizes 3-alpha-hydroxysteroids. Oxidizes androstanediol and androsterone to dihydrotestosterone and androstanedione. Can also catalyze the reverse reaction. In Mus musculus (Mouse), this protein is Retinol dehydrogenase 16.